The following is a 293-amino-acid chain: Small ribosomal subunit biogenesis GTPase RsgA (293 aa).

In terms of domain architecture, CP-type G spans 63–223 (KNELVRPPIA…VADTPGFSSL (161 aa)). GTP contacts are provided by residues 112–115 (SKMD) and 166–174 (GQSGVGKSS). Positions 247, 252, 254, and 260 each coordinate Zn(2+).

The protein belongs to the TRAFAC class YlqF/YawG GTPase family. RsgA subfamily. As to quaternary structure, monomer. Associates with 30S ribosomal subunit, binds 16S rRNA. Requires Zn(2+) as cofactor.

Its subcellular location is the cytoplasm. Its function is as follows. One of several proteins that assist in the late maturation steps of the functional core of the 30S ribosomal subunit. Helps release RbfA from mature subunits. May play a role in the assembly of ribosomal proteins into the subunit. Circularly permuted GTPase that catalyzes slow GTP hydrolysis, GTPase activity is stimulated by the 30S ribosomal subunit. The sequence is that of Small ribosomal subunit biogenesis GTPase RsgA from Bacillus anthracis.